Here is a 471-residue protein sequence, read N- to C-terminus: Probable ribonuclease FAU-1 (471 aa).

This sequence belongs to the FAU-1 family.

In terms of biological role, probable RNase involved in rRNA stability through maturation and/or degradation of precursor rRNAs. Preferentially cleaves UA sequences in the 5' precursor region of 5S rRNA. Binds to RNA in loop regions with AU-rich sequences. This is Probable ribonuclease FAU-1 from Thermococcus kodakarensis (strain ATCC BAA-918 / JCM 12380 / KOD1) (Pyrococcus kodakaraensis (strain KOD1)).